The sequence spans 294 residues: UDP-3-O-acyl-N-acetylglucosamine deacetylase (294 aa).

Zn(2+) contacts are provided by H75, H232, and D236. H259 acts as the Proton donor in catalysis.

Belongs to the LpxC family. Requires Zn(2+) as cofactor.

It catalyses the reaction a UDP-3-O-[(3R)-3-hydroxyacyl]-N-acetyl-alpha-D-glucosamine + H2O = a UDP-3-O-[(3R)-3-hydroxyacyl]-alpha-D-glucosamine + acetate. It functions in the pathway glycolipid biosynthesis; lipid IV(A) biosynthesis; lipid IV(A) from (3R)-3-hydroxytetradecanoyl-[acyl-carrier-protein] and UDP-N-acetyl-alpha-D-glucosamine: step 2/6. In terms of biological role, catalyzes the hydrolysis of UDP-3-O-myristoyl-N-acetylglucosamine to form UDP-3-O-myristoylglucosamine and acetate, the committed step in lipid A biosynthesis. The polypeptide is UDP-3-O-acyl-N-acetylglucosamine deacetylase (Sulfurovum sp. (strain NBC37-1)).